The following is a 341-amino-acid chain: Putative NADPH-dependent methylglyoxal reductase GRP2 (341 aa).

NADP(+)-binding residues include K40 and Y171.

This sequence belongs to the NAD(P)-dependent epimerase/dehydratase family. Dihydroflavonol-4-reductase subfamily.

Its subcellular location is the cytoplasm. It catalyses the reaction (S)-lactaldehyde + NADP(+) = methylglyoxal + NADPH + H(+). Catalyzes the irreversible reduction of the cytotoxic compound methylglyoxal (MG, 2-oxopropanal) to (S)-lactaldehyde. MG is synthesized via a bypath of glycolysis from dihydroxyacetone phosphate and is believed to play a role in cell cycle regulation and stress adaptation. In Candida albicans (strain SC5314 / ATCC MYA-2876) (Yeast), this protein is Putative NADPH-dependent methylglyoxal reductase GRP2 (GRP2).